A 327-amino-acid chain; its full sequence is Aldo-keto reductase family 1 member A1 (327 aa).

NADP(+)-binding positions include 13–22 (GQKIPLIGLG), Thr23, Trp24, and Asp47. Catalysis depends on Tyr52, which acts as the Proton donor. NADP(+) is bound by residues Ser164, Asn165, Ser213, Leu215, Ser217, Lys265, Ser266, Val267, Thr268, Arg271, Gln274, and Asn275.

It belongs to the aldo/keto reductase family.

The protein localises to the cytoplasm. The protein resides in the cytosol. Its subcellular location is the apical cell membrane. It catalyses the reaction a primary alcohol + NADP(+) = an aldehyde + NADPH + H(+). It carries out the reaction S-nitroso-CoA + NADPH + H(+) = sulfinamide-CoA + NADP(+). The enzyme catalyses S-nitrosoglutathione + NADPH + H(+) = S-(hydroxysulfenamide)glutathione + NADP(+). Functionally, catalyzes the NADPH-dependent reduction of a wide variety of carbonyl-containing compounds to their corresponding alcohols. Displays enzymatic activity towards endogenous metabolites such as aromatic and aliphatic aldehydes, ketones, monosaccharides and bile acids. Acts as an aldehyde-detoxification enzyme. Also acts as an inhibitor of protein S-nitrosylation by mediating degradation of S-nitroso-coenzyme A (S-nitroso-CoA), a cofactor required to S-nitrosylate proteins. Also acts as a S-nitroso-glutathione reductase by catalyzing the NADPH-dependent reduction of S-nitrosoglutathione. Displays no reductase activity towards retinoids. The chain is Aldo-keto reductase family 1 member A1 (AKR1A1) from Gallus gallus (Chicken).